We begin with the raw amino-acid sequence, 602 residues long: mRNA-capping enzyme subunit beta (602 aa).

The segment at 1–249 is disordered; that stretch reads MSEHHSKRAL…NESNSEETHD (249 aa). Positions 15-42 are enriched in basic and acidic residues; that stretch reads LVNHDENDKSKLQKLADNESSVRSDDNR. Residues 48–64 show a composition bias toward low complexity; the sequence is NIVNGNNSNSDLNSNGV. Positions 65 to 76 are enriched in acidic residues; the sequence is IEEDTDTDDDVG. The segment covering 88 to 110 has biased composition (basic and acidic residues); that stretch reads DYDKQDRFSPEKKRIQARKKDTS. The span at 114-128 shows a compositional bias: low complexity; the sequence is PSISNESPSNSKESS. Positions 141-169 are enriched in basic and acidic residues; that stretch reads TDRKDSSEEKPDLTGPELVKEPDTNEYKR. Positions 171–181 are enriched in polar residues; the sequence is SIQSITNAEDT. Composition is skewed to basic and acidic residues over residues 213–222 and 231–249; these read TEEHKPKTET and QENK…ETHD. Catalysis depends on K276, which acts as the N6-GMP-lysine intermediate.

The protein belongs to the fungal TPase family. Heterodimer. The mRNA-capping enzyme is composed of two separate chains alpha and beta, respectively a mRNA guanylyltransferase and an mRNA 5'-triphosphate monophosphatase. The cofactor is Mg(2+).

It localises to the nucleus. The enzyme catalyses a 5'-end triphospho-ribonucleoside in mRNA + H2O = a 5'-end diphospho-ribonucleoside in mRNA + phosphate + H(+). In terms of biological role, first step of mRNA capping. Converts the 5'-triphosphate end of a nascent mRNA chain into a diphosphate end. The polypeptide is mRNA-capping enzyme subunit beta (CET1) (Candida glabrata (strain ATCC 2001 / BCRC 20586 / JCM 3761 / NBRC 0622 / NRRL Y-65 / CBS 138) (Yeast)).